Reading from the N-terminus, the 418-residue chain is Gamma-glutamyl phosphate reductase (418 aa).

Belongs to the gamma-glutamyl phosphate reductase family.

It localises to the cytoplasm. The catalysed reaction is L-glutamate 5-semialdehyde + phosphate + NADP(+) = L-glutamyl 5-phosphate + NADPH + H(+). The protein operates within amino-acid biosynthesis; L-proline biosynthesis; L-glutamate 5-semialdehyde from L-glutamate: step 2/2. Catalyzes the NADPH-dependent reduction of L-glutamate 5-phosphate into L-glutamate 5-semialdehyde and phosphate. The product spontaneously undergoes cyclization to form 1-pyrroline-5-carboxylate. The chain is Gamma-glutamyl phosphate reductase from Thermodesulfovibrio yellowstonii (strain ATCC 51303 / DSM 11347 / YP87).